Here is a 397-residue protein sequence, read N- to C-terminus: Formate-dependent phosphoribosylglycinamide formyltransferase (397 aa).

N(1)-(5-phospho-beta-D-ribosyl)glycinamide-binding positions include 22-23 and Glu-82; that span reads EL. Residues Arg-114, Lys-155, 160-165, 195-198, and Glu-203 each bind ATP; these read SSGKGQ and EGFV. The region spanning 119-312 is the ATP-grasp domain; sequence CLAAEELSLP…EFALHARAIL (194 aa). Mg(2+)-binding residues include Glu-271 and Glu-283. N(1)-(5-phospho-beta-D-ribosyl)glycinamide contacts are provided by residues Asp-290, Lys-360, and 367 to 368; that span reads RR.

Belongs to the PurK/PurT family. In terms of assembly, homodimer.

It carries out the reaction N(1)-(5-phospho-beta-D-ribosyl)glycinamide + formate + ATP = N(2)-formyl-N(1)-(5-phospho-beta-D-ribosyl)glycinamide + ADP + phosphate + H(+). The protein operates within purine metabolism; IMP biosynthesis via de novo pathway; N(2)-formyl-N(1)-(5-phospho-D-ribosyl)glycinamide from N(1)-(5-phospho-D-ribosyl)glycinamide (formate route): step 1/1. Its function is as follows. Involved in the de novo purine biosynthesis. Catalyzes the transfer of formate to 5-phospho-ribosyl-glycinamide (GAR), producing 5-phospho-ribosyl-N-formylglycinamide (FGAR). Formate is provided by PurU via hydrolysis of 10-formyl-tetrahydrofolate. The chain is Formate-dependent phosphoribosylglycinamide formyltransferase from Alcanivorax borkumensis (strain ATCC 700651 / DSM 11573 / NCIMB 13689 / SK2).